The primary structure comprises 264 residues: Phosphonoacetaldehyde hydrolase (264 aa).

Catalysis depends on D9, which acts as the Nucleophile. Positions 9 and 11 each coordinate Mg(2+). K50 acts as the Schiff-base intermediate with substrate in catalysis. A Mg(2+)-binding site is contributed by D183.

Belongs to the HAD-like hydrolase superfamily. PhnX family. Homodimer. The cofactor is Mg(2+).

The enzyme catalyses phosphonoacetaldehyde + H2O = acetaldehyde + phosphate + H(+). Involved in phosphonate degradation. The polypeptide is Phosphonoacetaldehyde hydrolase (Bacillus cereus (strain ATCC 14579 / DSM 31 / CCUG 7414 / JCM 2152 / NBRC 15305 / NCIMB 9373 / NCTC 2599 / NRRL B-3711)).